The primary structure comprises 1148 residues: Maintenance of telomere capping protein 5 (1148 aa).

WD repeat units lie at residues 63 to 106, 112 to 152, 156 to 195, 199 to 239, and 299 to 348; these read HHIT…SNAI, GHSR…RPFY, SWRSAASQVKWNYKDPNVLASSHGNDIFVWDLRKGSTPLC, GHVS…TESK, and GHSD…YGKV. Residues 432-543 form the RWD domain; it reads EEVSAIGHKF…RFVLGEKVSL (112 aa). At Ser-759 the chain carries Phosphoserine. The interval 963 to 990 is disordered; that stretch reads THNTLNGSSKFTEPAQKQGSRAISSSPF. The segment covering 964–990 has biased composition (polar residues); that stretch reads HNTLNGSSKFTEPAQKQGSRAISSSPF.

The protein belongs to the WD repeat WDR59 family. Component of the SEA complex composed of at least IML1/SEA1, RTC1/SEA2, MTC5/SEA3, NPR2, NPR3, SEA4, SEC13 and SEH1.

It is found in the vacuole membrane. In terms of biological role, component of the SEA complex which coats the vacuolar membrane and is involved in intracellular trafficking, autophagy, response to nitrogen starvation, and amino acid biogenesis. May be involved in telomere capping. The polypeptide is Maintenance of telomere capping protein 5 (MTC5) (Saccharomyces cerevisiae (strain ATCC 204508 / S288c) (Baker's yeast)).